Reading from the N-terminus, the 151-residue chain is Arginine repressor (151 aa).

This sequence belongs to the ArgR family.

The protein localises to the cytoplasm. The protein operates within amino-acid biosynthesis; L-arginine biosynthesis [regulation]. Regulates arginine biosynthesis genes. This chain is Arginine repressor, found in Haemophilus influenzae (strain PittGG).